A 522-amino-acid chain; its full sequence is MAFLDNPTIILAHIRQSHVTSDDTGMCEMVLIDHDVDLEKIHPPSMPGDSGSEIQGSNGETQGYVYAQSVDITSSWDFGIRRRSNTAQRLERLRKERQNQIKCKNIQWKERNSKQSAQELKSLFEKKSLKEKPPISGKQSILSVRLEQCPLQLNNPFNEYSKFDGKGHVGTTATKKIDVYLPLHSSQDRLLPMTVVTMASARVQDLIGLICWQYTSEGREPKLNDNVSAYCLHIAEDDGEVDTDFPPLDSNEPIHKFGFSTLALVEKYSSPGLTSKESLFVRINAAHGFSLIQVDNTKVTMKEILLKAVKRRKGSQKVSGPQYRLEKQSEPNVAVDLDSTLESQSAWEFCQVRENSSRADGVFEEDSQIDIATVQDMLSSHHYKSFKVSMIHRLRFTTDVQLGISGDKVEIDPVTNQKASTKFWIKQKPISIDSDLLCACDLAEEKSPSHAIFKLTYLSNHDYKHLYFESDAATVNEIVLKVNYILESRASTARADYFAQKQRKLNRRTSFSFQKEKKSGQQ.

Ala2 is modified (N-acetylalanine). The segment at 2–184 (AFLDNPTIIL…KKIDVYLPLH (183 aa)) is interaction with MAP3K2. Positions 2 to 267 (AFLDNPTIIL…GFSTLALVEK (266 aa)) are interaction with NBN. At Thr86 the chain carries Phosphothreonine. 4 positions are modified to phosphoserine: Ser128, Ser186, Ser315, and Ser356. Residues 139-267 (QSILSVRLEQ…GFSTLALVEK (129 aa)) enclose the CRIM domain. Residues 279–353 (LFVRINAAHG…QSAWEFCQVR (75 aa)) are SIN1-type RBD. The SIN1-type PH domain maps to 382–487 (HYKSFKVSMI…IVLKVNYILE (106 aa)). Arg393 is an a 1,2-diacyl-sn-glycero-3-phospho-(1D-myo-inositol-3,4,5-trisphosphate) binding site. A Phosphothreonine modification is found at Thr398. The a 1,2-diacyl-sn-glycero-3-phospho-(1D-myo-inositol-3,4,5-trisphosphate) site is built by Lys428 and Lys464. Residues 468–522 (FESDAATVNEIVLKVNYILESRASTARADYFAQKQRKLNRRTSFSFQKEKKSGQQ) are interaction with ATF2. Ser510 is subject to Phosphoserine.

The protein belongs to the SIN1 family. As to quaternary structure, component of the mechanistic target of rapamycin complex 2 (mTORC2), consisting in two heterotretramers composed of MTOR, MLST8, RICTOR and MAPKAP1/SIN1. The mTORC2 core complex associates with PRR5/PROTOR1 and/or PRR5L/PROTOR2. Contrary to mTORC1, mTORC2 does not bind to and is not sensitive to FKBP12-rapamycin. Interacts with MAP3K2. Interacts with ATF2. Interacts with MAPK8. Interacts with GTP-bound HRAS and KRAS; inhibiting their activity. Interacts with IFNAR2. In terms of processing, phosphorylation at Ser-128 by PKC promotes relocalization to the perinuclear region, where the mTORC2 complex specifically mediates phosphorylation of SGK1. Phosphorylated at Thr-86 by AKT1 or RPS6KB1 in the presence of growth factors; the effect of this phosphorylation is however unclear. According to two studies, phosphorylation at Thr-86 by AKT1 is part of a positive feedback loop that increases mTORC2 activation. According to another study, phosphorylation at Thr-86 and Thr-398 by RPS6KB1 promotes dissociation from the mTORC2 complex, leading to inhibit mTORC2 signaling.

It is found in the cell membrane. It localises to the endoplasmic reticulum membrane. The protein localises to the early endosome membrane. The protein resides in the late endosome membrane. Its subcellular location is the lysosome membrane. It is found in the golgi apparatus membrane. It localises to the mitochondrion outer membrane. The protein localises to the cytoplasm. The protein resides in the perinuclear region. Its subcellular location is the nucleus. With respect to regulation, phosphatidylinositol 3,4,5-trisphosphate (PI(3,4,5)P3) promotes MTOR activation by relieving MAPKAP1/SIN1-mediated inhibition of MTOR that takes place in absence of PI(3,4,5)P3. Functionally, component of the mechanistic target of rapamycin complex 2 (mTORC2), which transduces signals from growth factors to pathways involved in proliferation, cytoskeletal organization, lipogenesis and anabolic output. In response to growth factors, mTORC2 phosphorylates and activates AGC protein kinase family members, including AKT (AKT1, AKT2 and AKT3), PKC (PRKCA, PRKCB and PRKCE) and SGK1. In contrast to mTORC1, mTORC2 is nutrient-insensitive. Within the mTORC2 complex, MAPKAP1/SIN1 acts as a substrate adapter which recognizes and binds AGC protein kinase family members for phosphorylation by MTOR. mTORC2 plays a critical role in AKT1 activation by mediating phosphorylation of different sites depending on the context, such as 'Thr-450', 'Ser-473', 'Ser-477' or 'Thr-479', facilitating the phosphorylation of the activation loop of AKT1 on 'Thr-308' by PDPK1/PDK1 which is a prerequisite for full activation. mTORC2 catalyzes the phosphorylation of SGK1 at 'Ser-422' and of PRKCA on 'Ser-657'. The mTORC2 complex also phosphorylates various proteins involved in insulin signaling, such as FBXW8 and IGF2BP1. mTORC2 acts upstream of Rho GTPases to regulate the actin cytoskeleton, probably by activating one or more Rho-type guanine nucleotide exchange factors. mTORC2 promotes the serum-induced formation of stress-fibers or F-actin. MAPKAP1 inhibits MAP3K2 by preventing its dimerization and autophosphorylation. Inhibits HRAS and KRAS independently of mTORC2 complex. Enhances osmotic stress-induced phosphorylation of ATF2 and ATF2-mediated transcription. Involved in ciliogenesis, regulates cilia length through its interaction with CCDC28B independently of mTORC2 complex. The protein is Target of rapamycin complex 2 subunit MAPKAP1 (MAPKAP1) of Pongo abelii (Sumatran orangutan).